Reading from the N-terminus, the 616-residue chain is Protein NRT1/ PTR FAMILY 2.11 (616 aa).

Positions 1-22 (MERKPLELESTDNHQNPSSAVY) are disordered. The next 12 membrane-spanning stretches (helical) occupy residues 59–79 (FEKL…TAVF), 87–107 (ATII…AAFL), 118–138 (LSVA…TAAV), 159–179 (GGQI…AGGI), 205–225 (FFNW…TLVV), 233–253 (WTIG…IFFA), 349–369 (VKCI…YLTI), 392–412 (FVIP…VFIV), 435–455 (LQRI…AGFV), 483–503 (AMWL…AAIG), 519–539 (FAGS…SFLI), and 566–586 (LFYF…LVMS).

It belongs to the major facilitator superfamily. Proton-dependent oligopeptide transporter (POT/PTR) (TC 2.A.17) family. As to expression, expressed in roots. Detected in shoots, stems and flowers. Expressed in veins and in the root vasculature with highest expression in lateral branching points.

The protein localises to the cell membrane. Functionally, high-affinity, proton-dependent glucosinolate-specific transporter. Involved in apoplasmic phloem-loading of glucosinolates and in bidirectional long-distance transport of aliphatic but not indole glucosinolates. May be involved in removal of glucosinolates from the xylem in roots. In Arabidopsis thaliana (Mouse-ear cress), this protein is Protein NRT1/ PTR FAMILY 2.11 (NPF2.11).